The following is a 217-amino-acid chain: Uracil-DNA glycosylase (217 aa).

Residue Asp62 is the Proton acceptor of the active site.

Belongs to the uracil-DNA glycosylase (UDG) superfamily. UNG family.

Its subcellular location is the cytoplasm. The enzyme catalyses Hydrolyzes single-stranded DNA or mismatched double-stranded DNA and polynucleotides, releasing free uracil.. Functionally, excises uracil residues from the DNA which can arise as a result of misincorporation of dUMP residues by DNA polymerase or due to deamination of cytosine. In Streptococcus mutans serotype c (strain ATCC 700610 / UA159), this protein is Uracil-DNA glycosylase.